The primary structure comprises 401 residues: Phosphoglycerate kinase (401 aa).

Residues 24 to 26 (DFN), arginine 40, 63 to 66 (HFGR), arginine 122, and arginine 155 each bind substrate. Residues lysine 206, glycine 297, glutamate 328, and 357 to 360 (GGDS) each bind ATP.

This sequence belongs to the phosphoglycerate kinase family. In terms of assembly, monomer.

The protein resides in the cytoplasm. The catalysed reaction is (2R)-3-phosphoglycerate + ATP = (2R)-3-phospho-glyceroyl phosphate + ADP. It functions in the pathway carbohydrate degradation; glycolysis; pyruvate from D-glyceraldehyde 3-phosphate: step 2/5. The chain is Phosphoglycerate kinase from Prochlorococcus marinus (strain NATL2A).